Here is a 423-residue protein sequence, read N- to C-terminus: MDNHNSSHQLYKKAMALVLAGGRGSRLYNLTDTRAKPAVYFGGKFRIIDFALSNCLNSGIRRIGVVTQYKSHSLLRHLQRGWGFLRGELNEFIDLLPAQQRVDEEHWYRGTADAVYQNIDILRSYGPEYVIVLAGDHIYKMDYSIMLRDHAQSGYKCTVGCVEIAKEEAYAFGIMGIDENRKITSFIEKPKKNAPTIPGTTDRCYASMGIYIFNSDYLYDLLEEDITNKESSHDFGKDIIPRVVSENQALAHPFSMSCVPRCEGIEPYWRDVGTIDAFWEANLDLAANMPELNIYDKDWPVWTAQEQLPPVKFVPDRNGNHGVITNTLASGGCIVLGSEISKSLMFSKVRVLAGCKIDQCVIMPEVVVGENCRLKKVVIDKGCDIPAGMVIGEDPIEDAKNFYRTDKGVVLVTKKMIDELKEK.

Alpha-D-glucose 1-phosphate contacts are provided by residues Y108, G173, 188 to 189 (EK), and S207.

It belongs to the bacterial/plant glucose-1-phosphate adenylyltransferase family. As to quaternary structure, homotetramer.

The catalysed reaction is alpha-D-glucose 1-phosphate + ATP + H(+) = ADP-alpha-D-glucose + diphosphate. It functions in the pathway glycan biosynthesis; glycogen biosynthesis. Functionally, involved in the biosynthesis of ADP-glucose, a building block required for the elongation reactions to produce glycogen. Catalyzes the reaction between ATP and alpha-D-glucose 1-phosphate (G1P) to produce pyrophosphate and ADP-Glc. This chain is Glucose-1-phosphate adenylyltransferase, found in Francisella tularensis subsp. tularensis (strain WY96-3418).